A 379-amino-acid chain; its full sequence is Cytochrome b (379 aa).

4 helical membrane passes run 33–53 (FGSL…FLAM), 77–98 (WLIR…YLHI), 113–133 (WNIG…GYVL), and 178–198 (FFAF…LHLL). The heme b site is built by His83 and His97. His182 and His196 together coordinate heme b. His201 is a binding site for a ubiquinone. 4 consecutive transmembrane segments (helical) span residues 226 to 246 (YKDL…ALFY), 288 to 308 (LGGV…PILH), 320 to 340 (ISQL…WIGG), and 347 to 367 (YIII…VLNP).

Belongs to the cytochrome b family. The cytochrome bc1 complex contains 3 respiratory subunits (MT-CYB, CYC1 and UQCRFS1), 2 core proteins (UQCRC1 and UQCRC2) and probably 6 low-molecular weight proteins. Heme b serves as cofactor.

Its subcellular location is the mitochondrion inner membrane. In terms of biological role, component of the ubiquinol-cytochrome c reductase complex (complex III or cytochrome b-c1 complex) that is part of the mitochondrial respiratory chain. The b-c1 complex mediates electron transfer from ubiquinol to cytochrome c. Contributes to the generation of a proton gradient across the mitochondrial membrane that is then used for ATP synthesis. The chain is Cytochrome b (mt-cyb) from Anguilla mossambica (African longfin eel).